We begin with the raw amino-acid sequence, 453 residues long: o-phthalyl amidase (453 aa).

Monomer. The N-terminus is blocked.

The enzyme catalyses a phtalamide + H2O = phthalate + a primary amine. With respect to regulation, inhibited by iodoacetate, p-hydroxymercuric benzoate and copper ions. Its function is as follows. Catalyzes the removal of the phthalyl group from phthalyl amides generating phthalate and an amine. The enzyme has a broad substrate specificity and hydrolyzes phthalylated amino acids, peptides, beta-lactams, aromatic and aliphatic amines; substitutions allowed on the phthalyl group include 6-F, 6-NH(2), 3-OH, and a nitrogen in the aromatic ring ortho to the carboxy group attached to the amine. The protein is o-phthalyl amidase of Xanthobacter agilis.